The primary structure comprises 929 residues: Protocadherin gamma-B3 (929 aa).

Residues Met1–Ser30 form the signal peptide. Cadherin domains follow at residues Glu31–Phe133, Ser134–Phe242, Thr243–Ile347, Thr348–Phe452, His453–Val562, and Glu570–Leu675. Residues Glu31 to His691 are Extracellular-facing. An N-linked (GlcNAc...) asparagine glycan is attached at Asn136. Residues Asn419 and Asn545 are each glycosylated (N-linked (GlcNAc...) asparagine). Residues Leu692–Ser712 traverse the membrane as a helical segment. Topologically, residues Leu713–Lys929 are cytoplasmic. Disordered stretches follow at residues Asn791–Asn838 and Ala899–Lys929. Residues Asn919–Lys929 show a composition bias toward basic residues.

It localises to the cell membrane. In terms of biological role, potential calcium-dependent cell-adhesion protein. May be involved in the establishment and maintenance of specific neuronal connections in the brain. The chain is Protocadherin gamma-B3 (PCDHGB3) from Homo sapiens (Human).